The sequence spans 32 residues: Conotoxin Cltx-4 (32 aa).

4-hydroxyproline occurs at positions 2, 24, 28, and 30. Ser-32 is subject to Serine amide.

In terms of processing, contains 4 disulfide bonds. As to expression, expressed by the venom duct.

The protein resides in the secreted. The chain is Conotoxin Cltx-4 from Californiconus californicus (California cone).